The sequence spans 286 residues: Ribosomal RNA small subunit methyltransferase H (286 aa).

Residues 30-32, Asp49, Phe88, Asp97, and Gln104 contribute to the S-adenosyl-L-methionine site; that span reads GGH. Residues 260–286 form a disordered region; sequence HPLQPSDEESFNNPASRSAKLRALEMR.

The protein belongs to the methyltransferase superfamily. RsmH family.

Its subcellular location is the cytoplasm. The enzyme catalyses cytidine(1402) in 16S rRNA + S-adenosyl-L-methionine = N(4)-methylcytidine(1402) in 16S rRNA + S-adenosyl-L-homocysteine + H(+). In terms of biological role, specifically methylates the N4 position of cytidine in position 1402 (C1402) of 16S rRNA. In Solibacter usitatus (strain Ellin6076), this protein is Ribosomal RNA small subunit methyltransferase H.